The following is a 196-amino-acid chain: MILKLAKRYGLCGFIRLVRDVLLTRVFYRNCRIIRFPCYIRNDGSINFGENFTSGVGLRLDAFGRGVIFFSDNVQVNDYVHIASIESVTIGRDTLIASKVFITDHNHGSFKHSDPMSSPNIPPDMRTLESSAVVIGQRVWLGENVTVLPGTIIGNGVVVGANSVVRGSIPENTVIAGVPAKIIKKYNHETKLWEKA.

Belongs to the transferase hexapeptide repeat family.

It participates in bacterial outer membrane biogenesis; lipopolysaccharide biosynthesis. Functionally, putative O-acetyltransferase that transfers an O-acetyl group to the O antigen. This Escherichia coli (strain K12) protein is Putative lipopolysaccharide biosynthesis O-acetyl transferase WbbJ (wbbJ).